A 526-amino-acid polypeptide reads, in one-letter code: 4-alpha-glucanotransferase (526 aa).

Belongs to the disproportionating enzyme family.

The protein localises to the cytoplasm. The enzyme catalyses Transfers a segment of a (1-&gt;4)-alpha-D-glucan to a new position in an acceptor, which may be glucose or a (1-&gt;4)-alpha-D-glucan.. In Chlamydia pneumoniae (Chlamydophila pneumoniae), this protein is 4-alpha-glucanotransferase (malQ).